The chain runs to 485 residues: Cysteine--tRNA ligase (485 aa).

Cys27 contributes to the Zn(2+) binding site. A 'HIGH' region motif is present at residues 29–39; that stretch reads ITAYDLCHIGH. Zn(2+) is bound by residues Cys208, His233, and Glu237. The 'KMSKS' region signature appears at 265-269; that stretch reads KMSKS. ATP is bound at residue Lys268.

It belongs to the class-I aminoacyl-tRNA synthetase family. Monomer. Zn(2+) serves as cofactor.

The protein localises to the cytoplasm. It carries out the reaction tRNA(Cys) + L-cysteine + ATP = L-cysteinyl-tRNA(Cys) + AMP + diphosphate. This Maridesulfovibrio salexigens (strain ATCC 14822 / DSM 2638 / NCIMB 8403 / VKM B-1763) (Desulfovibrio salexigens) protein is Cysteine--tRNA ligase.